Here is an 84-residue protein sequence, read N- to C-terminus: Large ribosomal subunit protein bL27 (84 aa).

Residues Met1–Leu21 form a disordered region.

This sequence belongs to the bacterial ribosomal protein bL27 family.

This is Large ribosomal subunit protein bL27 from Chloroherpeton thalassium (strain ATCC 35110 / GB-78).